A 478-amino-acid chain; its full sequence is Probable glucan endo-1,3-beta-glucosidase A6 (478 aa).

The first 20 residues, 1–20 (MSLLAFFLFTILVFSSSCCS), serve as a signal peptide directing secretion. E135 serves as the catalytic Proton donor. E280 functions as the Nucleophile in the catalytic mechanism. An intrachain disulfide couples C390 to C453.

The protein belongs to the glycosyl hydrolase 17 family. Post-translationally, contains two additional disulfide bonds, but it is unclear if they are between the pairs Cys-409-Cys-416 and Cys-425-Cys-471 or between the pairs Cys-409-Cys-471 and Cys-416-Cys-425. In terms of tissue distribution, anthers.

It catalyses the reaction Hydrolysis of (1-&gt;3)-beta-D-glucosidic linkages in (1-&gt;3)-beta-D-glucans.. Its function is as follows. Probable beta-1,3-glucanase that may be involved in the degradation of callose walls around the microspore tetrad during pollen development. May be required for pollen exine formation. The polypeptide is Probable glucan endo-1,3-beta-glucosidase A6 (Arabidopsis thaliana (Mouse-ear cress)).